We begin with the raw amino-acid sequence, 938 residues long: Isoleucine--tRNA ligase (938 aa).

The 'HIGH' region signature appears at proline 58–histidine 68. Glutamate 566 contributes to the L-isoleucyl-5'-AMP binding site. Positions lysine 607–serine 611 match the 'KMSKS' region motif. ATP is bound at residue lysine 610. Residues cysteine 906, cysteine 909, cysteine 926, and cysteine 929 each coordinate Zn(2+).

This sequence belongs to the class-I aminoacyl-tRNA synthetase family. IleS type 1 subfamily. Monomer. The cofactor is Zn(2+).

It is found in the cytoplasm. The enzyme catalyses tRNA(Ile) + L-isoleucine + ATP = L-isoleucyl-tRNA(Ile) + AMP + diphosphate. Catalyzes the attachment of isoleucine to tRNA(Ile). As IleRS can inadvertently accommodate and process structurally similar amino acids such as valine, to avoid such errors it has two additional distinct tRNA(Ile)-dependent editing activities. One activity is designated as 'pretransfer' editing and involves the hydrolysis of activated Val-AMP. The other activity is designated 'posttransfer' editing and involves deacylation of mischarged Val-tRNA(Ile). The sequence is that of Isoleucine--tRNA ligase from Desulfovibrio desulfuricans (strain ATCC 27774 / DSM 6949 / MB).